Here is a 220-residue protein sequence, read N- to C-terminus: Ribose-5-phosphate isomerase A (220 aa).

Substrate contacts are provided by residues 28 to 31 (TGST), 81 to 84 (DGAD), and 94 to 97 (KGGG). The active-site Proton acceptor is E103. Residue K121 coordinates substrate.

It belongs to the ribose 5-phosphate isomerase family. Homodimer.

It carries out the reaction aldehydo-D-ribose 5-phosphate = D-ribulose 5-phosphate. It participates in carbohydrate degradation; pentose phosphate pathway; D-ribose 5-phosphate from D-ribulose 5-phosphate (non-oxidative stage): step 1/1. Its function is as follows. Catalyzes the reversible conversion of ribose-5-phosphate to ribulose 5-phosphate. The chain is Ribose-5-phosphate isomerase A from Coxiella burnetii (strain CbuK_Q154) (Coxiella burnetii (strain Q154)).